The sequence spans 520 residues: Cobyric acid synthase (520 aa).

The 195-residue stretch at 257 to 451 (WLTVAAVRLP…VHGLLESDGF (195 aa)) folds into the GATase cobBQ-type domain. Catalysis depends on cysteine 338, which acts as the Nucleophile. Histidine 443 is a catalytic residue.

Belongs to the CobB/CobQ family. CobQ subfamily.

Its pathway is cofactor biosynthesis; adenosylcobalamin biosynthesis. Functionally, catalyzes amidations at positions B, D, E, and G on adenosylcobyrinic A,C-diamide. NH(2) groups are provided by glutamine, and one molecule of ATP is hydrogenolyzed for each amidation. The chain is Cobyric acid synthase from Nocardia farcinica (strain IFM 10152).